Reading from the N-terminus, the 625-residue chain is MRPAQTNQFDYVKIGLASPERIRQWGERTLPNGQVVGEVTKPETINYRTLKPEMDGLFCERIFGPAKDWECHCGKYKRVRHRGIVCERCGVEVTESRVRRHRMGYIKLAAPVAHVWYLKGIPSYISILLDMPLRDVEQIVYFNSYVVLSPGNAETLTYKQLLSEDQWLEIEDQIYSEDSVLQGVEVGIGAEALLRLLADINLEQEAESLREEIGNAKGQKRAKLIKRLRVIDNFIATGSKPEWMVMAVIPVIPPDLRPMVQLDGGRFATSDLNDLYRRVINRNNRLARLQEILAPEIIVRNEKRMLQEAVDALIDNGRRGRTVVGANNRPLKSLSDIIEGKQGRFRQNLLGKRVDYSGRSVIVVGPKLKIHQCGLPREMAIELFQPFVINRLIRSGMVNNIKAAKKLISRNDPSVWDVLEEVIEGHPVMLNRAPTLHRLGIQSFEPILVEGRAIQLHPLVCPAFNADFDGDQMAVHVPLSLESQAEARLLMLASNNILSPATGKPIITPSQDMVLGAYYLTAENPGATKGAGNYFSSLEDVIMAFQQDQIDLHAYIYVRFDGEIESDQPDTEPVKVTENEDGTRTLLYKFRRVRQDAKGNVLSQYIYTTPGRVIYNNAIQEALAS.

Cysteine 71, cysteine 73, cysteine 86, and cysteine 89 together coordinate Zn(2+). Residues aspartate 467, aspartate 469, and aspartate 471 each contribute to the Mg(2+) site.

Belongs to the RNA polymerase beta' chain family. RpoC1 subfamily. In terms of assembly, in cyanobacteria the RNAP catalytic core is composed of 2 alpha, 1 beta, 1 beta', 1 gamma and 1 omega subunit. When a sigma factor is associated with the core the holoenzyme is formed, which can initiate transcription. The cofactor is Mg(2+). Requires Zn(2+) as cofactor.

The enzyme catalyses RNA(n) + a ribonucleoside 5'-triphosphate = RNA(n+1) + diphosphate. In terms of biological role, DNA-dependent RNA polymerase catalyzes the transcription of DNA into RNA using the four ribonucleoside triphosphates as substrates. This Nostoc punctiforme (strain ATCC 29133 / PCC 73102) protein is DNA-directed RNA polymerase subunit gamma.